We begin with the raw amino-acid sequence, 284 residues long: Bifunctional protein FolD (284 aa).

Residues 165 to 167 and serine 190 contribute to the NADP(+) site; that span reads GRS.

The protein belongs to the tetrahydrofolate dehydrogenase/cyclohydrolase family. Homodimer.

The catalysed reaction is (6R)-5,10-methylene-5,6,7,8-tetrahydrofolate + NADP(+) = (6R)-5,10-methenyltetrahydrofolate + NADPH. It carries out the reaction (6R)-5,10-methenyltetrahydrofolate + H2O = (6R)-10-formyltetrahydrofolate + H(+). It functions in the pathway one-carbon metabolism; tetrahydrofolate interconversion. Its function is as follows. Catalyzes the oxidation of 5,10-methylenetetrahydrofolate to 5,10-methenyltetrahydrofolate and then the hydrolysis of 5,10-methenyltetrahydrofolate to 10-formyltetrahydrofolate. The chain is Bifunctional protein FolD from Streptococcus equi subsp. zooepidemicus (strain MGCS10565).